An 826-amino-acid polypeptide reads, in one-letter code: G-protein coupled receptor-associated sorting protein 2 (826 aa).

Disordered stretches follow at residues 1–126 (MTGA…AQAW), 204–286 (WCYP…NPFC), 336–371 (EGNR…QESR), and 506–534 (IPEG…DSVA). The segment covering 13 to 31 (KPDKKPQEEVAGGAERESE) has biased composition (basic and acidic residues). Polar residues predominate over residues 59–73 (SSRARPKTETQSVSG). The span at 231–247 (TREETSIRSWPREEVNT) shows a compositional bias: basic and acidic residues. The span at 248-264 (RSRHRAKHQTNARSKPR) shows a compositional bias: basic residues. Phosphoserine is present on residues Ser-275 and Ser-277.

Belongs to the GPRASP family. In terms of assembly, interacts with cytoplasmic tails of a variety of G-protein coupled receptors such as muscarinic acetylcholine receptor M1/CHRM1 and calcitonin receptor/CALCR. In terms of tissue distribution, strongly expressed in the brain and the cochlea. Also in lung and muscle tissues. Localized in multiple structures of the cochlea, detected in the spiral ganglion, stria vascularis, spiral ligament, inner and outer hair cells.

In terms of biological role, may play a role in regulation of a variety of G-protein coupled receptors. The sequence is that of G-protein coupled receptor-associated sorting protein 2 (Gprasp2) from Mus musculus (Mouse).